Consider the following 85-residue polypeptide: Toxin BmKT (85 aa).

A signal peptide spans 1-19 (MNYLVFFSLALLLMTGVES). An LCN-type CS-alpha/beta domain is found at 21 to 83 (RDGYIADDKN…VPIRVPGKCN (63 aa)). Cystine bridges form between Cys-31/Cys-82, Cys-35/Cys-55, Cys-41/Cys-65, and Cys-45/Cys-67.

This sequence belongs to the long (4 C-C) scorpion toxin superfamily. Sodium channel inhibitor family. Alpha subfamily. As to expression, expressed by the venom gland.

The protein localises to the secreted. Functionally, binds to sodium channels (Nav) and inhibits the inactivation of the activated channels, thereby blocking neuronal transmission. Tested on mice, has antitumor effect and strong inhibitory effect on pain. This chain is Toxin BmKT, found in Olivierus martensii (Manchurian scorpion).